The primary structure comprises 264 residues: Apolipoprotein A-I (264 aa).

A signal peptide spans 1–18; it reads MRVVVVTLALLFLTGTQA. 2 tandem repeats follow at residues 67 to 88 and 89 to 110. Residues 67-264 form a 10 X approximate tandem repeats region; the sequence is LKLADNLDTL…LLDELQKTVA (198 aa). One copy of the 3; half-length repeat lies at 111-121; it reads KDLEEVKEKIR. Tandem repeats lie at residues 122–143, 144–165, 166–187, 188–209, and 210–231. A 9; half-length repeat occupies 232–242; it reads PLVQDFKERLT. Copy 10 of the repeat occupies 243–264; it reads PYAENLKTRFISLLDELQKTVA.

The protein belongs to the apolipoprotein A1/A4/E family. Major protein of plasma HDL, also found in chylomicrons.

It is found in the secreted. In terms of biological role, participates in the reverse transport of cholesterol from tissues to the liver for excretion by promoting cholesterol efflux from tissues and by acting as a cofactor for the lecithin cholesterol acyltransferase (LCAT). This chain is Apolipoprotein A-I (APOA1), found in Anas platyrhynchos (Mallard).